Reading from the N-terminus, the 506-residue chain is Maturase K (506 aa).

The protein belongs to the intron maturase 2 family. MatK subfamily.

The protein resides in the plastid. The protein localises to the chloroplast. Functionally, usually encoded in the trnK tRNA gene intron. Probably assists in splicing its own and other chloroplast group II introns. The chain is Maturase K from Rhododendron ferrugineum (Alpenrose).